A 135-amino-acid chain; its full sequence is Cystatin-1 (135 aa).

The signal sequence occupies residues Met1 to Ser24. A Secondary area of contact motif is present at residues Gln86–Gly90.

The protein belongs to the cystatin family. Phytocystatin subfamily.

This is Cystatin-1 (RAMDAZC7) from Zea mays (Maize).